The chain runs to 164 residues: Phosphopantetheine adenylyltransferase (164 aa).

Substrate is bound at residue Ser-9. ATP is bound by residues 9 to 10 (SF) and His-17. The substrate site is built by Lys-41, Leu-73, and Lys-87. Residues 88–90 (GLR), Glu-98, and 123–129 (YSYLSSS) each bind ATP.

This sequence belongs to the bacterial CoaD family. In terms of assembly, homohexamer. Mg(2+) serves as cofactor.

Its subcellular location is the cytoplasm. It catalyses the reaction (R)-4'-phosphopantetheine + ATP + H(+) = 3'-dephospho-CoA + diphosphate. It participates in cofactor biosynthesis; coenzyme A biosynthesis; CoA from (R)-pantothenate: step 4/5. Its function is as follows. Reversibly transfers an adenylyl group from ATP to 4'-phosphopantetheine, yielding dephospho-CoA (dPCoA) and pyrophosphate. The polypeptide is Phosphopantetheine adenylyltransferase (Clostridium botulinum (strain 657 / Type Ba4)).